We begin with the raw amino-acid sequence, 308 residues long: Elongation factor Ts (308 aa).

The segment at T80–V83 is involved in Mg(2+) ion dislocation from EF-Tu.

The protein belongs to the EF-Ts family.

The protein resides in the cytoplasm. In terms of biological role, associates with the EF-Tu.GDP complex and induces the exchange of GDP to GTP. It remains bound to the aminoacyl-tRNA.EF-Tu.GTP complex up to the GTP hydrolysis stage on the ribosome. This Erythrobacter litoralis (strain HTCC2594) protein is Elongation factor Ts.